The primary structure comprises 303 residues: Putative CRISPR-associated endonuclease Cas1 2 (303 aa).

A Mn(2+)-binding site is contributed by E149.

Belongs to the CRISPR-associated endonuclease Cas1 family. In terms of assembly, homodimer, forms a heterotetramer with a Cas2 homodimer. The cofactor is Mg(2+). Mn(2+) is required as a cofactor.

In terms of biological role, CRISPR (clustered regularly interspaced short palindromic repeat), is an adaptive immune system that provides protection against mobile genetic elements (viruses, transposable elements and conjugative plasmids). CRISPR clusters contain sequences complementary to antecedent mobile elements and target invading nucleic acids. CRISPR clusters are transcribed and processed into CRISPR RNA (crRNA). Acts as a dsDNA endonuclease. Involved in the integration of spacer DNA into the CRISPR cassette. This chain is Putative CRISPR-associated endonuclease Cas1 2, found in Methanospirillum hungatei JF-1 (strain ATCC 27890 / DSM 864 / NBRC 100397 / JF-1).